We begin with the raw amino-acid sequence, 97 residues long: Large ribosomal subunit protein bL28 (97 aa).

The protein belongs to the bacterial ribosomal protein bL28 family.

This is Large ribosomal subunit protein bL28 from Rickettsia peacockii (strain Rustic).